The sequence spans 263 residues: Acetylglutamate kinase (263 aa).

Residues 48-49 (GG), Arg70, and Asn162 contribute to the substrate site.

This sequence belongs to the acetylglutamate kinase family. ArgB subfamily.

It localises to the cytoplasm. The enzyme catalyses N-acetyl-L-glutamate + ATP = N-acetyl-L-glutamyl 5-phosphate + ADP. It participates in amino-acid biosynthesis; L-arginine biosynthesis; N(2)-acetyl-L-ornithine from L-glutamate: step 2/4. Its function is as follows. Catalyzes the ATP-dependent phosphorylation of N-acetyl-L-glutamate. The chain is Acetylglutamate kinase from Vibrio vulnificus (strain YJ016).